The following is a 445-amino-acid chain: Solute carrier family 52, riboflavin transporter, member 2 (445 aa).

A run of 6 helical transmembrane segments spans residues 14–34 (LLVA…WVEL), 47–67 (LPSY…VVTL), 86–106 (VLGM…APVA), 112–132 (VAFL…NVTF), 147–167 (FFLG…VQGV), and 196–216 (FFWA…GLLL). Residues 228–264 (ELGSGLQVGAPGAEEEVEESSPLQEPPSQAAGTTPGP) are disordered. The segment covering 247–258 (SSPLQEPPSQAA) has biased composition (low complexity). The next 5 helical transmembrane spans lie at 277 to 297 (ACLL…LPAV), 312 to 332 (LAVV…MGVL), 339 to 359 (LGGL…LAVL), 366 to 386 (VGTS…LGVF), and 404 to 424 (ALLA…VAMF).

The protein belongs to the riboflavin transporter family. In terms of tissue distribution, highly expressed in brain, fetal brain and salivary gland. Weakly expressed in other tissues.

The protein localises to the cell membrane. It catalyses the reaction riboflavin(in) = riboflavin(out). With respect to regulation, riboflavin transport is Na(+)-independent but moderately pH-sensitive. Activity is strongly inhibited by riboflavin analogs, such as lumiflavin. Weakly inhibited by flavin adenine dinucleotide (FAD) and flavin mononucleotide (FMN). Plasma membrane transporter mediating the uptake by cells of the water soluble vitamin B2/riboflavin that plays a key role in biochemical oxidation-reduction reactions of the carbohydrate, lipid, and amino acid metabolism. Humans are unable to synthesize vitamin B2/riboflavin and must obtain it via intestinal absorption. May also act as a receptor for 4-hydroxybutyrate. In terms of biological role, (Microbial infection) In case of infection by retroviruses, acts as a cell receptor to retroviral envelopes similar to the porcine endogenous retrovirus (PERV-A). The sequence is that of Solute carrier family 52, riboflavin transporter, member 2 (SLC52A2) from Homo sapiens (Human).